We begin with the raw amino-acid sequence, 670 residues long: Thrombospondin-type laminin G domain and EAR repeat-containing protein (670 aa).

Residues 1 to 20 (MSALLMLCAVLLLLGTPSRG) form the signal peptide. The Laminin G-like domain occupies 59 to 278 (GLQFSATEPR…KVTLGSRPPC (220 aa)). 7 EAR repeats span residues 314–359 (DYVE…KWTD), 361–409 (KFVS…KWSP), 413–461 (KFTL…RWNP), 465–513 (LFEA…IWLV), 515–571 (AFQL…ELNI), 575–623 (TFVK…RWQG), and 626–669 (GFVA…KLRT). Asparagine 498 carries N-linked (GlcNAc...) asparagine glycosylation.

In terms of tissue distribution, in the organ of Corti, expression at postnatal day 1 (P1) is restricted to the basal region of the stereocilia of inner and outer hair cells (at protein level). Expressed in the organ of Corti at P1 and P7, in cochlear ganglion, stria vascularis and vestibular ends at P7, and in inferior colliculus, remaining brainstem, cerebellum, brain hemispheres and retina at P1, P7 and in the adult. Also detected in adult liver, lung, kidney, intestine and testis but not in heart or skeletal muscle.

It is found in the secreted. It localises to the cell surface. The protein resides in the cell projection. Its subcellular location is the stereocilium. In terms of biological role, plays a critical role in tooth and hair follicle morphogenesis through regulation of the Notch signaling pathway. May play a role in development or function of the auditory system. The polypeptide is Thrombospondin-type laminin G domain and EAR repeat-containing protein (Mus musculus (Mouse)).